A 411-amino-acid polypeptide reads, in one-letter code: tRNA pseudouridine synthase Pus10 (411 aa).

In terms of domain architecture, THUMP spans 65–192 (ALAKCHLPTR…SGQVKVVRNP (128 aa)). D244 acts as the Nucleophile in catalysis. The substrate site is built by Y305 and Y376.

The protein belongs to the pseudouridine synthase Pus10 family.

The catalysed reaction is uridine(54) in tRNA = pseudouridine(54) in tRNA. The enzyme catalyses uridine(55) in tRNA = pseudouridine(55) in tRNA. Its function is as follows. Responsible for synthesis of pseudouridine from uracil-54 and uracil-55 in the psi GC loop of transfer RNAs. In Pyrobaculum arsenaticum (strain DSM 13514 / JCM 11321 / PZ6), this protein is tRNA pseudouridine synthase Pus10.